Here is a 276-residue protein sequence, read N- to C-terminus: Ribosomal RNA small subunit methyltransferase A (276 aa).

S-adenosyl-L-methionine contacts are provided by N27, L29, G54, E75, D101, and N122.

Belongs to the class I-like SAM-binding methyltransferase superfamily. rRNA adenine N(6)-methyltransferase family. RsmA subfamily.

The protein localises to the cytoplasm. It catalyses the reaction adenosine(1518)/adenosine(1519) in 16S rRNA + 4 S-adenosyl-L-methionine = N(6)-dimethyladenosine(1518)/N(6)-dimethyladenosine(1519) in 16S rRNA + 4 S-adenosyl-L-homocysteine + 4 H(+). In terms of biological role, specifically dimethylates two adjacent adenosines (A1518 and A1519) in the loop of a conserved hairpin near the 3'-end of 16S rRNA in the 30S particle. May play a critical role in biogenesis of 30S subunits. The polypeptide is Ribosomal RNA small subunit methyltransferase A (Brucella suis (strain ATCC 23445 / NCTC 10510)).